Consider the following 154-residue polypeptide: SsrA-binding protein (154 aa).

The disordered stretch occupies residues 131–154 (DKRQDLKQKEAKRDIERAFKERQQ). A compositionally biased stretch (basic and acidic residues) spans 132-154 (KRQDLKQKEAKRDIERAFKERQQ).

It belongs to the SmpB family.

Its subcellular location is the cytoplasm. In terms of biological role, required for rescue of stalled ribosomes mediated by trans-translation. Binds to transfer-messenger RNA (tmRNA), required for stable association of tmRNA with ribosomes. tmRNA and SmpB together mimic tRNA shape, replacing the anticodon stem-loop with SmpB. tmRNA is encoded by the ssrA gene; the 2 termini fold to resemble tRNA(Ala) and it encodes a 'tag peptide', a short internal open reading frame. During trans-translation Ala-aminoacylated tmRNA acts like a tRNA, entering the A-site of stalled ribosomes, displacing the stalled mRNA. The ribosome then switches to translate the ORF on the tmRNA; the nascent peptide is terminated with the 'tag peptide' encoded by the tmRNA and targeted for degradation. The ribosome is freed to recommence translation, which seems to be the essential function of trans-translation. This Listeria innocua serovar 6a (strain ATCC BAA-680 / CLIP 11262) protein is SsrA-binding protein.